The following is a 401-amino-acid chain: tRNA(Met) cytidine acetate ligase (401 aa).

ATP contacts are provided by residues 7-20 (IVEYNPLHNGHLYH), Gly102, Asn164, and Arg189.

It belongs to the TmcAL family.

The protein resides in the cytoplasm. The enzyme catalyses cytidine(34) in elongator tRNA(Met) + acetate + ATP = N(4)-acetylcytidine(34) in elongator tRNA(Met) + AMP + diphosphate. Its function is as follows. Catalyzes the formation of N(4)-acetylcytidine (ac(4)C) at the wobble position of elongator tRNA(Met), using acetate and ATP as substrates. First activates an acetate ion to form acetyladenylate (Ac-AMP) and then transfers the acetyl group to tRNA to form ac(4)C34. The sequence is that of tRNA(Met) cytidine acetate ligase from Caldanaerobacter subterraneus subsp. tengcongensis (strain DSM 15242 / JCM 11007 / NBRC 100824 / MB4) (Thermoanaerobacter tengcongensis).